The following is a 154-amino-acid chain: Ribosome maturation factor RimP (154 aa).

This sequence belongs to the RimP family.

Its subcellular location is the cytoplasm. Required for maturation of 30S ribosomal subunits. This is Ribosome maturation factor RimP from Carboxydothermus hydrogenoformans (strain ATCC BAA-161 / DSM 6008 / Z-2901).